We begin with the raw amino-acid sequence, 94 residues long: Integration host factor subunit beta (94 aa).

It belongs to the bacterial histone-like protein family. In terms of assembly, heterodimer of an alpha and a beta chain.

Functionally, this protein is one of the two subunits of integration host factor, a specific DNA-binding protein that functions in genetic recombination as well as in transcriptional and translational control. The chain is Integration host factor subunit beta from Ruegeria pomeroyi (strain ATCC 700808 / DSM 15171 / DSS-3) (Silicibacter pomeroyi).